We begin with the raw amino-acid sequence, 408 residues long: tRNA-specific 2-thiouridylase MnmA (408 aa).

Residues Gly-38–Ser-45 and Met-64 each bind ATP. Residues Asn-124–Asp-126 are interaction with target base in tRNA. Cys-129 acts as the Nucleophile in catalysis. Residues Cys-129 and Cys-231 are joined by a disulfide bond. Gly-153 serves as a coordination point for ATP. Residues Lys-181–Gln-183 form an interaction with tRNA region. Cys-231 acts as the Cysteine persulfide intermediate in catalysis. The interval Arg-348–Tyr-349 is interaction with tRNA.

It belongs to the MnmA/TRMU family.

The protein localises to the cytoplasm. It carries out the reaction S-sulfanyl-L-cysteinyl-[protein] + uridine(34) in tRNA + AH2 + ATP = 2-thiouridine(34) in tRNA + L-cysteinyl-[protein] + A + AMP + diphosphate + H(+). Its function is as follows. Catalyzes the 2-thiolation of uridine at the wobble position (U34) of tRNA, leading to the formation of s(2)U34. The chain is tRNA-specific 2-thiouridylase MnmA from Psychrobacter arcticus (strain DSM 17307 / VKM B-2377 / 273-4).